The following is a 458-amino-acid chain: Argininosuccinate lyase (458 aa).

The protein belongs to the lyase 1 family. Argininosuccinate lyase subfamily.

It localises to the cytoplasm. The enzyme catalyses 2-(N(omega)-L-arginino)succinate = fumarate + L-arginine. It participates in amino-acid biosynthesis; L-arginine biosynthesis; L-arginine from L-ornithine and carbamoyl phosphate: step 3/3. In Geobacter sp. (strain M21), this protein is Argininosuccinate lyase.